Consider the following 239-residue polypeptide: Probable plastid-lipid-associated protein 8, chloroplastic (239 aa).

The transit peptide at 1-52 directs the protein to the chloroplast; the sequence is MAATASSLTIASSFSEPRTQIHSSRRLNLPLQYSIPYKVLRSRSRRLGLVVS. Ser53 carries the N-acetylserine modification.

The protein belongs to the PAP/fibrillin family.

Its subcellular location is the plastid. It localises to the chloroplast. In Arabidopsis thaliana (Mouse-ear cress), this protein is Probable plastid-lipid-associated protein 8, chloroplastic (PAP8).